The sequence spans 731 residues: Autophagy-related protein 20 (731 aa).

Residues 1–22 (MSSVLRNQDNPPTISEVSSTTK) show a composition bias toward polar residues. Residues 1-130 (MSSVLRNQDN…NNKSNNVSRV (130 aa)) are disordered. Residues 31-41 (KQEEKEKEKEI) are compositionally biased toward basic and acidic residues. The span at 69–82 (SFMTANSFNEGPNT) shows a compositional bias: polar residues. Composition is skewed to low complexity over residues 92–102 (NNNSSSNNNRG) and 113–128 (LLLY…NNVS). In terms of domain architecture, PX spans 164–340 (IQITEAGNSN…KFLDPNANWG (177 aa)). A 1,2-diacyl-sn-glycero-3-phospho-(1D-myo-inositol-3-phosphate) contacts are provided by arginine 205, serine 207, and lysine 231. The tract at residues 253 to 277 (SVAGSNGNSGGSGGGGASGGAGSGS) is disordered. The span at 259-277 (GNSGGSGGGGASGGAGSGS) shows a compositional bias: gly residues. Residue arginine 306 participates in a 1,2-diacyl-sn-glycero-3-phospho-(1D-myo-inositol-3-phosphate) binding. The disordered stretch occupies residues 586–626 (NSQVKPKNGKYNLEQQQSSTVSPAPPPGPPPSSSSSSSSSS). The segment covering 608 to 617 (PAPPPGPPPS) has biased composition (pro residues).

It belongs to the sorting nexin family.

The protein resides in the endosome membrane. Its subcellular location is the preautophagosomal structure membrane. Required for cytoplasm to vacuole transport (Cvt), pexophagy and mitophagy. Also involved in endoplasmic reticulum-specific autophagic process and is essential for the survival of cells subjected to severe ER stress. Functions in protein retrieval from the endocytic pathway. The protein is Autophagy-related protein 20 (ATG20) of Candida albicans (strain SC5314 / ATCC MYA-2876) (Yeast).